Consider the following 504-residue polypeptide: Major capsid protein (504 aa).

Interacts with the auxiliary capsid protein (via FD region). Interacts with the head fiber dimeric protein. Interacts with the head fiber trimeric protein. Interacts with the portal vertex auxiliary protein.

Its subcellular location is the virion. Its function is as follows. Capsid protein self-assembles to form an icosahedral capsid, with a T=9 symmetry, about 77 nm in diameter. Each asymmetric capsid nonamer is covered by 9 capsid auxiliary protein, 1 copy of the trimeric head fiber protein and 2 copies of the dimeric head fiber protein. This chain is Major capsid protein, found in Bacteroides intestinalis (Bacteroides phage PhiCrAss001).